A 238-amino-acid chain; its full sequence is Formate dehydrogenase, cytochrome b556 subunit (238 aa).

The heme b site is built by His-23 and His-62. 4 helical membrane-spanning segments follow: residues 23–43 (HWML…FFFP), 60–80 (AIHP…ALLY), 120–140 (MLFW…IIMW), and 155–175 (IAIL…LVHI). Residues His-160 and His-174 each contribute to the heme b site.

Belongs to the formate dehydrogenase gamma subunit family. Formate dehydrogenase is a membrane-bound complex, formed by subunits alpha, beta and gamma. The cofactor is heme.

Its subcellular location is the cell membrane. Allows to use formate as major electron donor during anaerobic respiration. Subunit gamma is probably the cytochrome b556(FDO) component of the formate dehydrogenase. The protein is Formate dehydrogenase, cytochrome b556 subunit (fdxI) of Haemophilus influenzae (strain ATCC 51907 / DSM 11121 / KW20 / Rd).